We begin with the raw amino-acid sequence, 399 residues long: Fructose-1,6-bisphosphate aldolase/phosphatase (399 aa).

The Proton acceptor; for FBP phosphatase activity role is filled by D11. Positions 11, 18, 52, and 53 each coordinate Mg(2+). H18 contributes to the beta-D-fructose 1,6-bisphosphate binding site. Residue H18 coordinates dihydroxyacetone phosphate. Y91 serves as a coordination point for beta-D-fructose 1,6-bisphosphate. Q95 is a Mg(2+) binding site. 104-105 contributes to the beta-D-fructose 1,6-bisphosphate binding site; sequence GN. D132 contributes to the Mg(2+) binding site. K133 provides a ligand contact to beta-D-fructose 1,6-bisphosphate. K133 is a binding site for dihydroxyacetone phosphate. The active-site Proton donor/acceptor; for FBP aldolase activity is Y229. Residues K232, D233, and D234 each contribute to the Mg(2+) site. Residue K232 is the Schiff-base intermediate with DHAP; for FBP aldolase activity of the active site. Residues 242–243, R266, D297, and Y358 contribute to the beta-D-fructose 1,6-bisphosphate site; that span reads QS. Dihydroxyacetone phosphate-binding residues include R266 and D297.

Belongs to the FBP aldolase/phosphatase family. As to quaternary structure, homooctamer; dimer of tetramers. It depends on Mg(2+) as a cofactor.

The enzyme catalyses beta-D-fructose 1,6-bisphosphate + H2O = beta-D-fructose 6-phosphate + phosphate. It carries out the reaction beta-D-fructose 1,6-bisphosphate = D-glyceraldehyde 3-phosphate + dihydroxyacetone phosphate. Its pathway is carbohydrate biosynthesis; gluconeogenesis. Catalyzes two subsequent steps in gluconeogenesis: the aldol condensation of dihydroxyacetone phosphate (DHAP) and glyceraldehyde-3-phosphate (GA3P) to fructose-1,6-bisphosphate (FBP), and the dephosphorylation of FBP to fructose-6-phosphate (F6P). The chain is Fructose-1,6-bisphosphate aldolase/phosphatase from Pyrobaculum neutrophilum (strain DSM 2338 / JCM 9278 / NBRC 100436 / V24Sta) (Thermoproteus neutrophilus).